Consider the following 295-residue polypeptide: Lectin 11 (295 aa).

At 1–22 the chain is on the cytoplasmic side; that stretch reads MHYSHFYFIINNTNMTINAIPK. A helical membrane pass occupies residues 23–45; sequence LFATKNSISLSIVIFMYLLILVA. Residues 46-295 are Extracellular-facing; that stretch reads NVKSDSSFNF…ILSWSFTSNM (250 aa). N152 carries N-linked (GlcNAc...) asparagine glycosylation.

Belongs to the leguminous lectin family.

The protein resides in the membrane. Its function is as follows. May be involved in arbuscular mycorrhizal (AM) symbiosis with AM fungi. The chain is Lectin 11 from Medicago truncatula (Barrel medic).